A 391-amino-acid chain; its full sequence is Phosphoglycerate kinase (391 aa).

Substrate contacts are provided by residues 21-23 (DLN), Arg36, 59-62 (HLGR), Arg113, and Arg146. ATP-binding positions include Lys197, Glu319, and 345–348 (GGDT).

Belongs to the phosphoglycerate kinase family. As to quaternary structure, monomer.

It is found in the cytoplasm. The catalysed reaction is (2R)-3-phosphoglycerate + ATP = (2R)-3-phospho-glyceroyl phosphate + ADP. The protein operates within carbohydrate degradation; glycolysis; pyruvate from D-glyceraldehyde 3-phosphate: step 2/5. This Shewanella denitrificans (strain OS217 / ATCC BAA-1090 / DSM 15013) protein is Phosphoglycerate kinase.